The sequence spans 839 residues: Protein translocase subunit SecA (839 aa).

ATP contacts are provided by residues glutamine 85, 103-107 (GEGKT), and aspartate 493. Residues 780-790 (QIHEQERERAS) show a composition bias toward basic and acidic residues. The interval 780 to 839 (QIHEQERERASQRATTAAPQNIQSQQSANTDDLPKVERNEACPCGSGKKFKNCHGRKSFS) is disordered. The segment covering 791-809 (QRATTAAPQNIQSQQSANT) has biased composition (polar residues). Residues cysteine 821, cysteine 823, cysteine 832, and histidine 833 each contribute to the Zn(2+) site. Basic residues predominate over residues 827 to 839 (KKFKNCHGRKSFS).

This sequence belongs to the SecA family. In terms of assembly, monomer and homodimer. Part of the essential Sec protein translocation apparatus which comprises SecA, SecYEG and auxiliary proteins SecDF. Other proteins may also be involved. The cofactor is Zn(2+).

It is found in the cell membrane. The protein localises to the cytoplasm. It carries out the reaction ATP + H2O + cellular proteinSide 1 = ADP + phosphate + cellular proteinSide 2.. Part of the Sec protein translocase complex. Interacts with the SecYEG preprotein conducting channel. Has a central role in coupling the hydrolysis of ATP to the transfer of proteins into and across the cell membrane, serving as an ATP-driven molecular motor driving the stepwise translocation of polypeptide chains across the membrane. The chain is Protein translocase subunit SecA from Streptococcus pyogenes serotype M6 (strain ATCC BAA-946 / MGAS10394).